A 653-amino-acid polypeptide reads, in one-letter code: Alpha-L-iduronidase (653 aa).

A signal peptide spans 1 to 27; it reads MRPLRPRAALLALLASLLAAPPVAPAE. 3 residues coordinate alpha-D-mannopyranose: P54, L56, and H58. H91 serves as a coordination point for alpha-L-iduronate. N-linked (GlcNAc...) asparagine glycosylation is present at N110. Residues N181 and E182 each coordinate alpha-L-iduronate. E182 serves as the catalytic Proton donor. N190 carries N-linked (GlcNAc...) asparagine glycosylation. Alpha-L-iduronate-binding residues include K264, E299, and G305. Residue E299 is the Nucleophile of the active site. W306 is an alpha-D-mannopyranose binding site. N336 carries N-linked (GlcNAc...) asparagine glycosylation. Residues D349 and R363 each coordinate alpha-L-iduronate. N-linked (GlcNAc...) asparagine glycosylation is found at N372, N415, and N451. R488 and R492 together coordinate alpha-D-mannopyranose. R492 contributes to the beta-D-mannose binding site. A disulfide bond links C541 and C577.

This sequence belongs to the glycosyl hydrolase 39 family. As to quaternary structure, monomer. N-glycosylation at Asn-372 contributes to substrate binding and is required for full enzymatic activity. As to expression, ubiquitous.

The protein resides in the lysosome. It catalyses the reaction Hydrolysis of unsulfated alpha-L-iduronosidic linkages in dermatan sulfate.. The protein is Alpha-L-iduronidase (IDUA) of Homo sapiens (Human).